The chain runs to 647 residues: LIM domain kinase 1 (647 aa).

LIM zinc-binding domains lie at 25-75 (CASC…CKKD) and 84-137 (CHGC…CGHC). The region spanning 165 to 258 (LVSIPASSHG…LLQLTLEHDP (94 aa)) is the PDZ domain. Ser210 is subject to Phosphoserine. Thr229 is modified (phosphothreonine). Positions 260-319 (DTLGHGLGPETSPLSSPAYTPSGEAGSSARQKPVLRSCSIDRSPGAGSLGSPASQRKDLG) are disordered. Residues Ser298, Ser302, Ser307, and Ser310 each carry the phosphoserine modification. Over residues 302 to 313 (SPGAGSLGSPAS) the composition is skewed to low complexity. Ser323 carries the post-translational modification Phosphoserine; by MAPKAPK2. Ser337 is subject to Phosphoserine. A Protein kinase domain is found at 339-604 (LIHGEVLGKG…PSFVKLEHWL (266 aa)). ATP is bound by residues 345–353 (LGKGCFGQA) and Lys368. The active site involves Asp460. Phosphothreonine; by ROCK1 and PAK1 is present on Thr508.

This sequence belongs to the protein kinase superfamily. TKL Ser/Thr protein kinase family. Interacts (via LIM domain) with the cytoplasmic domain of NRG1. Interacts with NISCH. Interacts with RLIM and RNF6. Self-associates to form homodimers. Interacts with HSP90AA1; this interaction promotes LIMK1 dimerization and subsequent transphosphorylation. Interacts with CDKN1C. Interacts with SSH1. Interacts with ROCK1. Interacts (via LIM zinc-binding domains) with FAM89B/LRAP25 (via LRR repeat). Forms a tripartite complex with CDC42BPA, CDC42BPB and FAM89B/LRAP25. Post-translationally, autophosphorylated. Phosphorylated on Thr-508 by ROCK1 and PAK1, resulting in activation. Phosphorylated by PAK4 which increases the ability of LIMK1 to phosphorylate cofilin. Phosphorylated at Ser-323 by MAPKAPK2 during activation of VEGFA-induced signaling, which results in activation of LIMK1 and promotion of actin reorganization, cell migration, and tubule formation of endothelial cells. Dephosphorylated and inactivated by SSH1. Phosphorylated by CDC42BP. Ubiquitinated. 'Lys-48'-linked polyubiquitination by RNF6 leads to proteasomal degradation through the 26S proteasome, modulating LIMK1 levels in the growth cone and its effect on axonal outgrowth. Also polyubiquitinated by RLIM. As to expression, highest expression in both adult and fetal nervous system. Detected ubiquitously throughout the different regions of adult brain, with highest levels in the cerebral cortex. Expressed to a lesser extent in heart and skeletal muscle.

It localises to the cytoplasm. The protein resides in the nucleus. The protein localises to the cytoskeleton. It is found in the cell projection. Its subcellular location is the lamellipodium. The catalysed reaction is L-seryl-[protein] + ATP = O-phospho-L-seryl-[protein] + ADP + H(+). It carries out the reaction L-threonyl-[protein] + ATP = O-phospho-L-threonyl-[protein] + ADP + H(+). In terms of biological role, serine/threonine-protein kinase that plays an essential role in the regulation of actin filament dynamics. Acts downstream of several Rho family GTPase signal transduction pathways. Activated by upstream kinases including ROCK1, PAK1 and PAK4, which phosphorylate LIMK1 on a threonine residue located in its activation loop. LIMK1 subsequently phosphorylates and inactivates the actin binding/depolymerizing factors cofilin-1/CFL1, cofilin-2/CFL2 and destrin/DSTN, thereby preventing the cleavage of filamentous actin (F-actin), and stabilizing the actin cytoskeleton. In this way LIMK1 regulates several actin-dependent biological processes including cell motility, cell cycle progression, and differentiation. Phosphorylates TPPP on serine residues, thereby promoting microtubule disassembly. Stimulates axonal outgrowth and may be involved in brain development. Has a dominant negative effect on actin cytoskeletal changes. Required for atypical chemokine receptor ACKR2-induced phosphorylation of cofilin (CFL1). In Homo sapiens (Human), this protein is LIM domain kinase 1 (LIMK1).